The primary structure comprises 107 residues: uncharacterized protein (107 aa).

2 helical membrane-spanning segments follow: residues 14-34 and 68-88; these read YLAE…IVAW and FFVF…LVPI.

Its subcellular location is the cell membrane. This is an uncharacterized protein from Haemophilus influenzae (strain ATCC 51907 / DSM 11121 / KW20 / Rd).